The following is a 625-amino-acid chain: Chaperone protein HtpG (625 aa).

Residues 1 to 330 form an a; substrate-binding region; sequence MAKQVQNFNA…SSDLSLNVSR (330 aa). A b region spans residues 331-545; it reads ELLQQDRQVT…SADPSAHMQK (215 aa). The segment at 546 to 625 is c; the sequence is LMAQMGKEYA…MVQAADSTKH (80 aa).

Belongs to the heat shock protein 90 family. As to quaternary structure, homodimer.

Its subcellular location is the cytoplasm. Molecular chaperone. Has ATPase activity. This chain is Chaperone protein HtpG, found in Bdellovibrio bacteriovorus (strain ATCC 15356 / DSM 50701 / NCIMB 9529 / HD100).